Consider the following 142-residue polypeptide: MAKKIAGQLKLQVPAGSATPSPPIGPALGQRGINIMEFCKAFNAQSQDLEKGSPIPVVITYYQDKSFTFTMKTPPVSYFLKKAANLKSGSKEPGKQSAGQISRAKVREIAETKMKDLNANDVEAAMRMVEGSARSMGLEVVG.

Residues 86–105 form a disordered region; it reads LKSGSKEPGKQSAGQISRAK.

This sequence belongs to the universal ribosomal protein uL11 family. In terms of assembly, part of the ribosomal stalk of the 50S ribosomal subunit. Interacts with L10 and the large rRNA to form the base of the stalk. L10 forms an elongated spine to which L12 dimers bind in a sequential fashion forming a multimeric L10(L12)X complex. One or more lysine residues are methylated.

Functionally, forms part of the ribosomal stalk which helps the ribosome interact with GTP-bound translation factors. The protein is Large ribosomal subunit protein uL11 of Chelativorans sp. (strain BNC1).